A 1211-amino-acid polypeptide reads, in one-letter code: Transient receptor potential cation channel subfamily A member 1 homolog (1211 aa).

Residues 1–811 (MSKKSLGLDV…LKYKWNRLGR (811 aa)) are Cytoplasmic-facing. ANK repeat units lie at residues 49-79 (NLRSIIHQSAREGNVNALQEALLKAPLAVNA), 83-112 (DFMTPLHYAARYGNYDAVKLLLSKNALPNT), 116-169 (EGDT…EIDP), 173-202 (YQLTPLHYAAMKSNFSALHALIKLKADVDA), 206-235 (NKMTPLLLACVHGSQEIIQELIKANSNVTK), 239-270 (RLNTVFHIVALRGEPEYLEMMMDHDPVEAIKA), 277-306 (EKKTPLRMAVEGNHPETLKKILQMEKKNSC), 311-340 (REKELIHFAAEKGFLEVLKALVEAGGNKNE), 344-374 (VKAVPLHVAAQMNQLEVVSYLIEEEKDNIDV), 378-407 (QGLTPLMMAVTHDSKKCVEYLIAKKANLTI), 411-440 (DERTPVFIGAKFNALSSVEYILDHLRKKNK), 473-502 (DQNTPMHIVASNGYLEMMQLLQKHGASITQ), 506-535 (DEETALHRAAIGGQTGAVRQLLEWDIRLLL), 540-569 (MGNSALHLAARSGHDATTKVLLDNGADKEA), 573-602 (YQKTPLQVAVDSGKLETCQRLVAKGAQIES), 605-634 (DTKTVLHTAAFYGNESIVRYFIAEGVTIDR), and 638-669 (EGKTAFDIACENDHKDVARAFLETDQWKNLMI). The helical transmembrane segment at 812–832 (PMYYFALFMYLVFIVSLTQYV) threads the bilayer. Residues 833 to 870 (RHTKAPYNVWNEESYYDSEYFDENETCPQINTTKPDVV) are Extracellular-facing. 2 N-linked (GlcNAc...) asparagine glycosylation sites follow: Asn856 and Asn863. The helical transmembrane segment at 871–891 (WKIIIQTLAVCQILVECFQLF) threads the bilayer. Residues 892–894 (QRK) are Cytoplasmic-facing. A helical transmembrane segment spans residues 895-915 (FAYLVNWENWIDCFIYSTALI). The Extracellular portion of the chain corresponds to 916–932 (TVYDFSECSATSGVRQN). Residues 933–953 (WQWILAALCIFFGWINLLFMI) form a helical membrane-spanning segment. The Cytoplasmic segment spans residues 954 to 975 (RKMPRFGIFVVMFVDIVKTFFR). Residues 976–996 (FFPVFVLFIIAFSSSFYVILQ) form a helical membrane-spanning segment. Residues 997–1004 (NRPEFSTI) are Extracellular-facing. The segment at residues 1005 to 1025 (FMSPLKTTVMMIGEFEFTGIF) is an intramembrane region (pore-forming). Residues 1026–1048 (HGDETTHAEKMFGPAHTAVACAL) lie on the Extracellular side of the membrane. Residues 1049-1069 (FFFFCIIMTILLMNLLVGLAV) traverse the membrane as a helical segment. Topologically, residues 1070 to 1193 (DDIKGVQEKA…EKQVRLEAII (124 aa)) are cytoplasmic. Residues 1149–1191 (EMYEREAEFTSEMTQKLQNQAAKLKNIQENIDVMYEKQVRLEA) adopt a coiled-coil conformation.

The protein belongs to the transient receptor (TC 1.A.4) family. As to quaternary structure, homotetramer. As to expression, expressed in many sensory neurons, including OLQ and IL1 neurons.

Its subcellular location is the cell membrane. In terms of biological role, receptor-activated non-selective cation channel involved in the nose-touch response and foraging behavior. Contributes to the neural responses of sensory neurons to touch, particularly after repeated mechanical stimulation. Has no apparent role in thermosensory or chemosensory behaviors. The sequence is that of Transient receptor potential cation channel subfamily A member 1 homolog (trpa-1) from Caenorhabditis elegans.